The chain runs to 482 residues: tRNA sulfurtransferase (482 aa).

One can recognise a THUMP domain in the interval 61-165; the sequence is LAIRDALTRI…DDRLLLIKGR (105 aa). Residues 183-184, Lys265, Gly287, and Gln296 contribute to the ATP site; that span reads LI. The cysteines at positions 344 and 456 are disulfide-linked. The region spanning 404-482 is the Rhodanese domain; sequence FGPNDVILDI…GFENVKAYRP (79 aa). The Cysteine persulfide intermediate role is filled by Cys456.

Belongs to the ThiI family.

The protein resides in the cytoplasm. The catalysed reaction is [ThiI sulfur-carrier protein]-S-sulfanyl-L-cysteine + a uridine in tRNA + 2 reduced [2Fe-2S]-[ferredoxin] + ATP + H(+) = [ThiI sulfur-carrier protein]-L-cysteine + a 4-thiouridine in tRNA + 2 oxidized [2Fe-2S]-[ferredoxin] + AMP + diphosphate. It catalyses the reaction [ThiS sulfur-carrier protein]-C-terminal Gly-Gly-AMP + S-sulfanyl-L-cysteinyl-[cysteine desulfurase] + AH2 = [ThiS sulfur-carrier protein]-C-terminal-Gly-aminoethanethioate + L-cysteinyl-[cysteine desulfurase] + A + AMP + 2 H(+). Its pathway is cofactor biosynthesis; thiamine diphosphate biosynthesis. Its function is as follows. Catalyzes the ATP-dependent transfer of a sulfur to tRNA to produce 4-thiouridine in position 8 of tRNAs, which functions as a near-UV photosensor. Also catalyzes the transfer of sulfur to the sulfur carrier protein ThiS, forming ThiS-thiocarboxylate. This is a step in the synthesis of thiazole, in the thiamine biosynthesis pathway. The sulfur is donated as persulfide by IscS. This is tRNA sulfurtransferase from Salmonella gallinarum (strain 287/91 / NCTC 13346).